The following is a 201-amino-acid chain: Recombination protein RecR (201 aa).

The segment at 59–74 (CEICGNMDTENICCIC) adopts a C4-type zinc-finger fold. In terms of domain architecture, Toprim spans 82 to 177 (SVIAVVETVA…KISRLASGIP (96 aa)).

Belongs to the RecR family.

May play a role in DNA repair. It seems to be involved in an RecBC-independent recombinational process of DNA repair. It may act with RecF and RecO. This chain is Recombination protein RecR, found in Rickettsia felis (strain ATCC VR-1525 / URRWXCal2) (Rickettsia azadi).